We begin with the raw amino-acid sequence, 191 residues long: Glycerol-3-phosphate acyltransferase (191 aa).

Helical transmembrane passes span 7 to 27 (ILVL…SYIG), 51 to 71 (KLAV…VMLA), 80 to 100 (FVFM…WLSF), 115 to 135 (FIEY…FVIF), 139 to 159 (SLSS…HYSA), and 161 to 181 (ESIT…ENIV).

It belongs to the PlsY family. Probably interacts with PlsX.

It localises to the cell inner membrane. The enzyme catalyses an acyl phosphate + sn-glycerol 3-phosphate = a 1-acyl-sn-glycero-3-phosphate + phosphate. Its pathway is lipid metabolism; phospholipid metabolism. In terms of biological role, catalyzes the transfer of an acyl group from acyl-phosphate (acyl-PO(4)) to glycerol-3-phosphate (G3P) to form lysophosphatidic acid (LPA). This enzyme utilizes acyl-phosphate as fatty acyl donor, but not acyl-CoA or acyl-ACP. This chain is Glycerol-3-phosphate acyltransferase, found in Ehrlichia canis (strain Jake).